The following is a 297-amino-acid chain: Putative thiosulfate sulfurtransferase SseA (297 aa).

2 consecutive Rhodanese domains span residues 31 to 138 and 168 to 286; these read GAPG…ETTL and ILGA…VPIV. C245 acts as the Cysteine persulfide intermediate in catalysis. Residue R250 participates in substrate binding.

It catalyses the reaction thiosulfate + hydrogen cyanide = thiocyanate + sulfite + 2 H(+). The protein is Putative thiosulfate sulfurtransferase SseA (sseA) of Mycobacterium tuberculosis (strain CDC 1551 / Oshkosh).